The sequence spans 28 residues: Conotoxin Cl1.2 (28 aa).

In terms of processing, contains 2 disulfide bonds. As to expression, expressed by the venom duct.

Its subcellular location is the secreted. This is Conotoxin Cl1.2 from Californiconus californicus (California cone).